Here is a 587-residue protein sequence, read N- to C-terminus: Sulfite reductase [NADPH] hemoprotein beta-component (587 aa).

The span at 1–13 (MQSTDNDLSQSPP) shows a compositional bias: polar residues. The tract at residues 1 to 20 (MQSTDNDLSQSPPKLSADEQ) is disordered. Residues C439, C445, C484, and C488 each contribute to the [4Fe-4S] cluster site. Position 488 (C488) interacts with siroheme.

The protein belongs to the nitrite and sulfite reductase 4Fe-4S domain family. Alpha(8)-beta(8). The alpha component is a flavoprotein, the beta component is a hemoprotein. The cofactor is siroheme. It depends on [4Fe-4S] cluster as a cofactor.

It carries out the reaction hydrogen sulfide + 3 NADP(+) + 3 H2O = sulfite + 3 NADPH + 4 H(+). The protein operates within sulfur metabolism; hydrogen sulfide biosynthesis; hydrogen sulfide from sulfite (NADPH route): step 1/1. Functionally, component of the sulfite reductase complex that catalyzes the 6-electron reduction of sulfite to sulfide. This is one of several activities required for the biosynthesis of L-cysteine from sulfate. This chain is Sulfite reductase [NADPH] hemoprotein beta-component, found in Bordetella petrii (strain ATCC BAA-461 / DSM 12804 / CCUG 43448).